The following is a 579-amino-acid chain: YTH domain-containing family protein 2 (579 aa).

Residues Met-1–Asn-45 are disordered. Position 2 is an N-acetylserine (Ser-2). Ser-2, Ser-4, Ser-5, Ser-22, Ser-39, and Ser-196 each carry phosphoserine. The segment at Ser-2–Glu-384 is localization to mRNA processing bodies (P-bodies). Residues Ala-247–Pro-387 form a disordered region. Over residues Ala-291–Pro-316 the composition is skewed to polar residues. Residues Ala-337 to Thr-349 show a composition bias toward low complexity. Ser-359 is modified (phosphoserine). Residues Ser-359–Val-371 are compositionally biased toward gly residues. The span at Gly-372–Ser-383 shows a compositional bias: polar residues. Positions Pro-385 to Lys-579 are interaction with m6A-containing mRNAs. Phosphoserine is present on Ser-394. The 135-residue stretch at Gly-410–Ile-544 folds into the YTH domain. RNA is bound by residues Lys-416–Tyr-418, Asp-422, Trp-432–Cys-433, Asn-462, Trp-486, and Trp-491.

It belongs to the YTHDF family. YTHDF2 subfamily. Interacts with CNOT1; interaction is direct and promotes recruitment of the CCR4-NOT complex. Interacts with YTHDF3. Interacts with RIDA/HRSP12; interaction leads to recruitment of the ribonuclease P/MRP complex. In terms of processing, ubiquitinated by the SCF(SKP2) complex, leading to its degradation. Widely expressed, with highest expression in testis.

The protein resides in the cytoplasm. Its subcellular location is the cytosol. The protein localises to the P-body. It is found in the stress granule. It localises to the nucleus. Its function is as follows. Specifically recognizes and binds N6-methyladenosine (m6A)-containing RNAs, and regulates their stability. M6A is a modification present at internal sites of mRNAs and some non-coding RNAs and plays a role in mRNA stability and processing. Acts as a regulator of mRNA stability by promoting degradation of m6A-containing mRNAs via interaction with the CCR4-NOT and ribonuclease P/MRP complexes, depending on the context. The YTHDF paralogs (YTHDF1, YTHDF2 and YTHDF3) share m6A-containing mRNAs targets and act redundantly to mediate mRNA degradation and cellular differentiation. M6A-containing mRNAs containing a binding site for RIDA/HRSP12 (5'-GGUUC-3') are preferentially degraded by endoribonucleolytic cleavage: cooperative binding of RIDA/HRSP12 and YTHDF2 to transcripts leads to recruitment of the ribonuclease P/MRP complex. Other m6A-containing mRNAs undergo deadenylation via direct interaction between YTHDF2 and CNOT1, leading to recruitment of the CCR4-NOT and subsequent deadenylation of m6A-containing mRNAs. Required maternally to regulate oocyte maturation: probably acts by binding to m6A-containing mRNAs, thereby regulating maternal transcript dosage during oocyte maturation, which is essential for the competence of oocytes to sustain early zygotic development. Also required during spermatogenesis: regulates spermagonial adhesion by promoting degradation of m6A-containing transcripts coding for matrix metallopeptidases. Also involved in hematopoietic stem cells specification by binding to m6A-containing mRNAs, leading to promote their degradation. Also acts as a regulator of neural development by promoting m6A-dependent degradation of neural development-related mRNA targets. Inhibits neural specification of induced pluripotent stem cells by binding to methylated neural-specific mRNAs and promoting their degradation, thereby restraining neural differentiation. Regulates circadian regulation of hepatic lipid metabolism: acts by promoting m6A-dependent degradation of PPARA transcripts. Regulates the innate immune response to infection by inhibiting the type I interferon response: acts by binding to m6A-containing IFNB transcripts and promoting their degradation. May also act as a promoter of cap-independent mRNA translation following heat shock stress: upon stress, relocalizes to the nucleus and specifically binds mRNAs with some m6A methylation mark at their 5'-UTR, protecting demethylation of mRNAs by FTO, thereby promoting cap-independent mRNA translation. Regulates mitotic entry by promoting the phase-specific m6A-dependent degradation of WEE1 transcripts. Promotes formation of phase-separated membraneless compartments, such as P-bodies or stress granules, by undergoing liquid-liquid phase separation upon binding to mRNAs containing multiple m6A-modified residues: polymethylated mRNAs act as a multivalent scaffold for the binding of YTHDF proteins, juxtaposing their disordered regions and thereby leading to phase separation. The resulting mRNA-YTHDF complexes then partition into different endogenous phase-separated membraneless compartments, such as P-bodies, stress granules or neuronal RNA granules. May also recognize and bind RNAs modified by C5-methylcytosine (m5C) and act as a regulator of rRNA processing. In Mus musculus (Mouse), this protein is YTH domain-containing family protein 2.